The primary structure comprises 96 residues: Auxin-responsive protein SAUR29 (96 aa).

It belongs to the ARG7 family.

The protein localises to the cell membrane. Its function is as follows. Functions as a positive effector of cell expansion through modulation of auxin transport. Involved in thermo-responsiveness of plant architecture. Enhances plasma membrane H(+)-ATPase. This is Auxin-responsive protein SAUR29 from Arabidopsis thaliana (Mouse-ear cress).